The sequence spans 510 residues: ATP synthase subunit alpha 1 (510 aa).

169–176 (GDRQTGKT) contributes to the ATP binding site.

Belongs to the ATPase alpha/beta chains family. F-type ATPases have 2 components, CF(1) - the catalytic core - and CF(0) - the membrane proton channel. CF(1) has five subunits: alpha(3), beta(3), gamma(1), delta(1), epsilon(1). CF(0) has three main subunits: a(1), b(2) and c(9-12). The alpha and beta chains form an alternating ring which encloses part of the gamma chain. CF(1) is attached to CF(0) by a central stalk formed by the gamma and epsilon chains, while a peripheral stalk is formed by the delta and b chains.

The protein resides in the cell inner membrane. The enzyme catalyses ATP + H2O + 4 H(+)(in) = ADP + phosphate + 5 H(+)(out). Produces ATP from ADP in the presence of a proton gradient across the membrane. The alpha chain is a regulatory subunit. The polypeptide is ATP synthase subunit alpha 1 (Marinomonas sp. (strain MWYL1)).